Consider the following 406-residue polypeptide: 4-hydroxy-3-methylbut-2-en-1-yl diphosphate synthase (ferredoxin) (406 aa).

C315, C318, C349, and E356 together coordinate [4Fe-4S] cluster.

The protein belongs to the IspG family. It depends on [4Fe-4S] cluster as a cofactor.

The catalysed reaction is (2E)-4-hydroxy-3-methylbut-2-enyl diphosphate + 2 oxidized [2Fe-2S]-[ferredoxin] + H2O = 2-C-methyl-D-erythritol 2,4-cyclic diphosphate + 2 reduced [2Fe-2S]-[ferredoxin] + H(+). The protein operates within isoprenoid biosynthesis; isopentenyl diphosphate biosynthesis via DXP pathway; isopentenyl diphosphate from 1-deoxy-D-xylulose 5-phosphate: step 5/6. Converts 2C-methyl-D-erythritol 2,4-cyclodiphosphate (ME-2,4cPP) into 1-hydroxy-2-methyl-2-(E)-butenyl 4-diphosphate. This is 4-hydroxy-3-methylbut-2-en-1-yl diphosphate synthase (ferredoxin) from Gloeothece citriformis (strain PCC 7424) (Cyanothece sp. (strain PCC 7424)).